The chain runs to 342 residues: Cathepsin B-like cysteine proteinase 2 (342 aa).

Positions 1 to 18 are cleaved as a signal peptide; sequence MKYLVLALCTYLCSQSGA. Residues 19-86 constitute a propeptide, activation peptide; the sequence is DENAAQGIPL…VKEDPDPEVD (68 aa). An N-linked (GlcNAc...) asparagine glycan is attached at Asn-99. Cystine bridges form between Cys-100-Cys-128, Cys-111-Cys-156, Cys-147-Cys-214, Cys-148-Cys-152, Cys-185-Cys-218, and Cys-193-Cys-205. The active site involves Cys-114. A glycan (N-linked (GlcNAc...) asparagine) is linked at Asn-138. An N-linked (GlcNAc...) asparagine glycan is attached at Asn-198. The active site involves His-285. A glycan (N-linked (GlcNAc...) asparagine) is linked at Asn-296. Asn-305 is a catalytic residue.

This sequence belongs to the peptidase C1 family.

Functionally, expression of the protease correlates with blood-feeding and suggests a role for the protease in blood digestion. This is Cathepsin B-like cysteine proteinase 2 (AC-2) from Haemonchus contortus (Barber pole worm).